A 125-amino-acid chain; its full sequence is MPSKDPESVIDKEIRKISARNDELIKQDGTLKREYTTLLRKVSSVITVLNSIDDADTGSAETELPRLISQATVEKVPELKWYNDQISLITEKLEDDEDIEVPEELMDAYTLYKETPLLYNDTHTP.

At Thr-124 the chain carries Phosphothreonine.

As to quaternary structure, component of the chromatin-remodeling INO80 complex, at least composed of ARP4, ARP5, ARP8, RVB1, RVB2, TAF14, NHP10, IES1, IES3, IES4, IES6, ACT1, IES2, IES5 and INO80.

The protein resides in the nucleus. This chain is Ino eighty subunit 5 (IES5), found in Saccharomyces cerevisiae (strain ATCC 204508 / S288c) (Baker's yeast).